Reading from the N-terminus, the 215-residue chain is Glutathione S-transferase F9 (215 aa).

The 80-residue stretch at 2–81 (VLKVYGPHFA…YVAEKYRSQG (80 aa)) folds into the GST N-terminal domain. Residue 11–12 (AS) coordinates glutathione. The residue at position 12 (Ser-12) is a Phosphoserine. Met-35 is modified (methionine sulfoxide). Residues 39-40 (HK), 52-53 (TV), and 65-66 (ES) each bind glutathione. The GST C-terminal domain maps to 88-215 (TVEDRGQVEQ…ETVAKYSFPA (128 aa)). Methionine sulfoxide is present on residues Met-118, Met-123, and Met-184.

Belongs to the GST superfamily. Phi family. Post-translationally, oxidated at Met-35, Met-118, Met-123 and Met-184 in oxidative stress conditions (e.g. hydrogen peroxide H(2)O(2)).

It is found in the cytoplasm. The protein resides in the cytosol. It carries out the reaction RX + glutathione = an S-substituted glutathione + a halide anion + H(+). With respect to regulation, redox-regulated enzyme; in oxidative stress conditions methionine oxidation ensure a thermodynamic and structural compensatory mechanism to guarantee H(2)O(2) peroxidase activity despite transferase activity inhibition. Its function is as follows. In vitro, possesses glutathione S-transferase activity toward 1-chloro-2,4-dinitrobenzene (CDNB) and benzyl isothiocyanate (BITC), and glutathione peroxidase activity toward cumene hydroperoxide and linoleic acid-13-hydroperoxide. May be involved in the conjugation of reduced glutathione to a wide number of exogenous and endogenous hydrophobic electrophiles and have a detoxification role against certain herbicides. This is Glutathione S-transferase F9 from Arabidopsis thaliana (Mouse-ear cress).